A 542-amino-acid chain; its full sequence is CTP synthase (542 aa).

Positions 1–265 are amidoligase domain; sequence MARYVFITGG…DSEVLSAFGI (265 aa). S13 contacts CTP. Residue S13 participates in UTP binding. 14 to 19 is an ATP binding site; it reads SLGKGI. Y54 contacts L-glutamine. D71 lines the ATP pocket. The Mg(2+) site is built by D71 and E139. CTP contacts are provided by residues 146–148, 186–191, and K222; these read DIE and KTKPTQ. Residues 186–191 and K222 contribute to the UTP site; that span reads KTKPTQ. The 251-residue stretch at 291 to 541 folds into the Glutamine amidotransferase type-1 domain; that stretch reads TIAVVGKYTG…IEAAIEQSRL (251 aa). G353 is an L-glutamine binding site. The active-site Nucleophile; for glutamine hydrolysis is the C380. L-glutamine-binding positions include 381-384, E404, and R469; that span reads FGMQ. Catalysis depends on residues H514 and E516.

The protein belongs to the CTP synthase family. As to quaternary structure, homotetramer.

It carries out the reaction UTP + L-glutamine + ATP + H2O = CTP + L-glutamate + ADP + phosphate + 2 H(+). The catalysed reaction is L-glutamine + H2O = L-glutamate + NH4(+). It catalyses the reaction UTP + NH4(+) + ATP = CTP + ADP + phosphate + 2 H(+). Its pathway is pyrimidine metabolism; CTP biosynthesis via de novo pathway; CTP from UDP: step 2/2. Its activity is regulated as follows. Allosterically activated by GTP, when glutamine is the substrate; GTP has no effect on the reaction when ammonia is the substrate. The allosteric effector GTP functions by stabilizing the protein conformation that binds the tetrahedral intermediate(s) formed during glutamine hydrolysis. Inhibited by the product CTP, via allosteric rather than competitive inhibition. Catalyzes the ATP-dependent amination of UTP to CTP with either L-glutamine or ammonia as the source of nitrogen. Regulates intracellular CTP levels through interactions with the four ribonucleotide triphosphates. This Brucella melitensis biotype 1 (strain ATCC 23456 / CCUG 17765 / NCTC 10094 / 16M) protein is CTP synthase.